Here is a 525-residue protein sequence, read N- to C-terminus: MAPTIFVDHCILTTTFVASLFAFLLLYVLRRRSKTIHGSVNVRNGTLTVKSGTDVDIIIVGAGVAGAALAHTLGKEGRRVHVIERDLTEPDRIVGELLQPGGYLKLIELGLEDCVKDIDAQRVLGYALFKDGKHTKLSYPLDQFDSDVAGRSFHNGRFVQRMREKASLLPNVRMEQGTVTSLVEENGIIKGVQYKTKDGQELKSFAPLTIVCDGCFSNLRRSLCKPKVEVPSNFVGLVLENCELPFPNHGHVVLGDPSPILFYPISSSEVRCLVDVPGSKLPSVASGEMAHHLKTMVAPQVPPQIRDAFISAVEKGNIRTMPNRSMPADPIHTPGALLLGDAFNMRHPLTGGGMTVALSDIVILRDLLNPLVDLTNKESLSKYIESFYTLRKPVASTINTLAGALYKVFLASPDDARSEMRRACFDYLSLGGVCSSGPVALLSGLNPRPMSLVLHFFAVAIFGVGRLLVPLPSVKRLWLGARLISSASGIIFPIIKAEGVRQMFFPRTIPAIYRAPPTPSSSSPQ.

The chain crosses the membrane as a helical span at residues 9-29 (HCILTTTFVASLFAFLLLYVL). FAD is bound by residues 64 to 65 (VA), 84 to 85 (ER), R92, R163, V179, D341, and M354. 2 helical membrane passes run 452 to 472 (LVLHFFAVAIFGVGRLLVPLP) and 477 to 497 (LWLGARLISSASGIIFPIIKA).

This sequence belongs to the squalene monooxygenase family. FAD serves as cofactor. Expressed in seedlings, leaves, stems, inflorescences and siliques.

The protein resides in the membrane. The enzyme catalyses squalene + reduced [NADPH--hemoprotein reductase] + O2 = (S)-2,3-epoxysqualene + oxidized [NADPH--hemoprotein reductase] + H2O + H(+). The protein operates within terpene metabolism; lanosterol biosynthesis; lanosterol from farnesyl diphosphate: step 2/3. Catalyzes the stereospecific oxidation of squalene to (S)-2,3-epoxysqualene, and is considered to be a rate-limiting enzyme in steroid biosynthesis. Can produce not only oxidosqualene, but also 2,3:22,23-dioxidosqualene. This is Squalene epoxidase 3 (SQE3) from Arabidopsis thaliana (Mouse-ear cress).